The sequence spans 470 residues: SVGFKAGVKEYKLTYYTPEYETKDTDILAAFRVTAQPGVPPEEAGAAVAAESSTGTWTAVWTDGLTSLDRYKGRCYHIEPVVGEEEQFIAYVAYPLDLFEEGSVTNMFTSIVGNVFGFKALRALRLEDLRIPTAYVKTFQGPPHGIQVERDKLNKYGRPLLGCTIKPKLGLSAKNYGRAVYECLRGGLDFTKDDENVNSQPFMRWRDRFCFCAEALYKAQAETGEIKGHYLNATAGTCEEMIKRAVFARELGVPIVMHDYLTGGFTANTTLAHYCRDNGLLLHIHRAMHAVIDRQKNHGMHFRVLAKALRMSGGDHVHAGTVVGKLEGERDITLGFVDLLRDDYIEKDRSRGVYFTQDWVSLPGVIPVASGGIHVWHMPALTEIFGDDAVLQFGGGTLGHPWGNPPGAVANRVALEACVKARNEGRDLATEGNEIIREACKWSPELAAACEVWKEIRFNFAAVDTLDPTA.

Position 5 is an N6,N6,N6-trimethyllysine (Lys-5). Positions 114 and 164 each coordinate substrate. The Proton acceptor role is filled by Lys-166. Lys-168 lines the substrate pocket. Residues Lys-192, Asp-194, and Glu-195 each contribute to the Mg(2+) site. Residue Lys-192 is modified to N6-carboxylysine. Catalysis depends on His-285, which acts as the Proton acceptor. 3 residues coordinate substrate: Arg-286, His-318, and Ser-370.

The protein belongs to the RuBisCO large chain family. Type I subfamily. Heterohexadecamer of 8 large chains and 8 small chains; disulfide-linked. The disulfide link is formed within the large subunit homodimers. Mg(2+) is required as a cofactor. The disulfide bond which can form in the large chain dimeric partners within the hexadecamer appears to be associated with oxidative stress and protein turnover.

Its subcellular location is the plastid. The protein resides in the chloroplast. The catalysed reaction is 2 (2R)-3-phosphoglycerate + 2 H(+) = D-ribulose 1,5-bisphosphate + CO2 + H2O. The enzyme catalyses D-ribulose 1,5-bisphosphate + O2 = 2-phosphoglycolate + (2R)-3-phosphoglycerate + 2 H(+). Its function is as follows. RuBisCO catalyzes two reactions: the carboxylation of D-ribulose 1,5-bisphosphate, the primary event in carbon dioxide fixation, as well as the oxidative fragmentation of the pentose substrate in the photorespiration process. Both reactions occur simultaneously and in competition at the same active site. The polypeptide is Ribulose bisphosphate carboxylase large chain (Bertiera breviflora).